We begin with the raw amino-acid sequence, 158 residues long: MQGRLSAWLVKHGLVHRSLGFDYQGIETLQIKPEDWHSIAVILYVYGYNYLRSQCAYDVAPGGLLASVYHLTRIEYGVDQPEEVCIKVFASRRNPRIPSVFWVWKSADFQERESYDMLGISYDNHPRLKRILMPESWIGWPLRKDYIAPNFYEIQDAH.

Belongs to the complex I 30 kDa subunit family. NDH is composed of at least 16 different subunits, 5 of which are encoded in the nucleus.

It is found in the plastid. The protein resides in the chloroplast thylakoid membrane. The enzyme catalyses a plastoquinone + NADH + (n+1) H(+)(in) = a plastoquinol + NAD(+) + n H(+)(out). It catalyses the reaction a plastoquinone + NADPH + (n+1) H(+)(in) = a plastoquinol + NADP(+) + n H(+)(out). In terms of biological role, NDH shuttles electrons from NAD(P)H:plastoquinone, via FMN and iron-sulfur (Fe-S) centers, to quinones in the photosynthetic chain and possibly in a chloroplast respiratory chain. The immediate electron acceptor for the enzyme in this species is believed to be plastoquinone. Couples the redox reaction to proton translocation, and thus conserves the redox energy in a proton gradient. This is NAD(P)H-quinone oxidoreductase subunit J, chloroplastic from Vitis vinifera (Grape).